The chain runs to 85 residues: Cell division topological specificity factor (85 aa).

It belongs to the MinE family.

In terms of biological role, prevents the cell division inhibition by proteins MinC and MinD at internal division sites while permitting inhibition at polar sites. This ensures cell division at the proper site by restricting the formation of a division septum at the midpoint of the long axis of the cell. This is Cell division topological specificity factor from Xylella fastidiosa (strain M23).